Here is a 302-residue protein sequence, read N- to C-terminus: TATA-box-binding protein (302 aa).

Disordered regions lie at residues 1-22 (MEQN…GAMT) and 50-81 (SLLE…QTPQ). The span at 50-70 (SLLEEQQRQQQQQQAASQQQG) shows a compositional bias: low complexity. 2 tandem repeats follow at residues 128-204 (LQNI…ARVV) and 218-295 (IQNM…YPIL).

It belongs to the TBP family. Enriched in testis but hardly detectable in the ovary (at protein level).

It is found in the nucleus. General transcription factor that functions at the core of the DNA-binding multiprotein factor TFIID. Binding of TFIID to the TATA box is the initial transcriptional step of the pre-initiation complex (PIC), playing a role in the activation of eukaryotic genes transcribed by RNA polymerase II. Members of the TBP family are differentially required for transcription and development during early embryogenesis. Regulates mRNA levels in the early embryo by both transcriptional and post-transcriptional mechanisms. Required for transcription of a subset of genes at the mid-blastula transition (MBT). Negatively regulates the expression of other embryonic genes, including autoregulation of the tbp promoter itself. Also functions within a transcription-dependent mechanism to direct the temporally-regulated degradation of a subset of maternal mRNAs after the MBT. This is part of a general mechanism to regulate the maternal to zygotic transition and is required for normal embryonic development. Binds to promoters of a subset of genes. Required for gastrulation. This chain is TATA-box-binding protein, found in Danio rerio (Zebrafish).